Here is a 1247-residue protein sequence, read N- to C-terminus: DNA-directed RNA polymerase subunit beta (1247 aa).

It belongs to the RNA polymerase beta chain family. In terms of assembly, in plastids the minimal PEP RNA polymerase catalytic core is composed of four subunits: alpha, beta, beta', and beta''. When a (nuclear-encoded) sigma factor is associated with the core the holoenzyme is formed, which can initiate transcription.

It localises to the plastid. It carries out the reaction RNA(n) + a ribonucleoside 5'-triphosphate = RNA(n+1) + diphosphate. In terms of biological role, DNA-dependent RNA polymerase catalyzes the transcription of DNA into RNA using the four ribonucleoside triphosphates as substrates. In Helicosporidium sp. subsp. Simulium jonesii (Green alga), this protein is DNA-directed RNA polymerase subunit beta (rpoB).